A 209-amino-acid polypeptide reads, in one-letter code: Thymidylate kinase (209 aa).

13–20 (GLEGAGKS) serves as a coordination point for ATP.

Belongs to the thymidylate kinase family.

It catalyses the reaction dTMP + ATP = dTDP + ADP. Phosphorylation of dTMP to form dTDP in both de novo and salvage pathways of dTTP synthesis. The polypeptide is Thymidylate kinase (Shewanella sp. (strain ANA-3)).